The sequence spans 94 residues: Putative regulatory protein Tmel_0100 (94 aa).

Belongs to the RemA family.

This is Putative regulatory protein Tmel_0100 from Thermosipho melanesiensis (strain DSM 12029 / CIP 104789 / BI429).